Here is a 278-residue protein sequence, read N- to C-terminus: NAD kinase (278 aa).

Aspartate 67 functions as the Proton acceptor in the catalytic mechanism. NAD(+)-binding positions include 67–68 (DG), arginine 72, 137–138 (NE), lysine 148, arginine 165, aspartate 167, 178–183 (TGYAMS), alanine 202, and glutamine 237.

This sequence belongs to the NAD kinase family. The cofactor is a divalent metal cation.

The protein resides in the cytoplasm. The catalysed reaction is NAD(+) + ATP = ADP + NADP(+) + H(+). In terms of biological role, involved in the regulation of the intracellular balance of NAD and NADP, and is a key enzyme in the biosynthesis of NADP. Catalyzes specifically the phosphorylation on 2'-hydroxyl of the adenosine moiety of NAD to yield NADP. This Thermococcus kodakarensis (strain ATCC BAA-918 / JCM 12380 / KOD1) (Pyrococcus kodakaraensis (strain KOD1)) protein is NAD kinase.